Reading from the N-terminus, the 138-residue chain is MPKGAAGAGPRRHIAAGLQVGSYVKVADNSGAKEAMIIGVIGYKGRLRRIPPAAVGDMVVVTVKKGTPEMRKQVVRAIVIRQRRPYRRPDGTWIAFEDNAVVIVSPDGTPKGSEIRGPVAREAAERWPKVANIASIII.

Belongs to the universal ribosomal protein uL14 family. As to quaternary structure, part of the 50S ribosomal subunit. Forms a cluster with proteins L3 and L24e, part of which may contact the 16S rRNA in 2 intersubunit bridges.

In terms of biological role, binds to 23S rRNA. Forms part of two intersubunit bridges in the 70S ribosome. In Hyperthermus butylicus (strain DSM 5456 / JCM 9403 / PLM1-5), this protein is Large ribosomal subunit protein uL14.